Consider the following 624-residue polypeptide: Translocator protein BipB (624 aa).

The disordered stretch occupies residues 54–99 (LASEQCDAQPVTDDARLDRLDDKPALRAPRSDAAHAADGNARGNGG). Basic and acidic residues predominate over residues 66–88 (DDARLDRLDDKPALRAPRSDAAH). A coiled-coil region spans residues 313 to 343 (EMQAKREAELQKKSDEYQEQVKKAEEMQKTM). 3 consecutive transmembrane segments (helical) span residues 359–379 (FAAA…GLAL), 405–425 (AILK…LVAC), and 434–454 (LAGA…AAFV).

Belongs to the SctE/SipB/YopB family.

It is found in the secreted. The protein localises to the host membrane. Plays a role in the bacterium-induced formation of multinucleated giant cell (MNGC), which is formed after host cell fusion, as well as in the intercellular spreading of bacteria and in the induction of apoptosis in macrophages. May act in concert with other effector proteins to induce fusion of host cell membranes. The polypeptide is Translocator protein BipB (bipB) (Burkholderia thailandensis (strain ATCC 700388 / DSM 13276 / CCUG 48851 / CIP 106301 / E264)).